The following is a 4678-amino-acid chain: E3 ubiquitin-protein ligase MYCBP2 (4678 aa).

Disordered regions lie at residues 87–127 (DRDQ…RSKS), 172–192 (SKNS…SKEP), and 609–628 (ASKG…KPYK). Over residues 100-124 (SRNKKILNKKKLKRKQKSKSKVKTR) the composition is skewed to basic residues. Residues S127, S178, S181, and S183 each carry the phosphoserine modification. RCC1 repeat units lie at residues 600–655 (DGSI…VISK), 699–755 (NGEV…MMCP), 907–957 (KRDK…VLME), 958–1008 (NGDV…VLLM), and 1010–1066 (GQVF…LRID). Positions 898 to 910 (RSHPAQLKHKRDK) are enriched in basic residues. Positions 898–928 (RSHPAQLKHKRDKHKDGSGERGEKDASKITT) are disordered. The span at 911 to 924 (HKDGSGERGEKDAS) shows a compositional bias: basic and acidic residues. The segment at 1235 to 1386 (NRFESHGGGW…GQIPQLLYRL (152 aa)) is PHR domain 1. S1624 is subject to Phosphoserine. The tract at residues 1726-1884 (NRFTKTSQGR…GQIPQILYYR (159 aa)) is PHR domain 2. The cysteines at positions 1748 and 1863 are disulfide-linked. Disordered regions lie at residues 1993–2012 (FNPN…QGLS) and 2321–2340 (QQDQ…VTAA). Residues 1994–2012 (NPNQSTDSTTGNQPEQGLS) are compositionally biased toward polar residues. The segment at 2022–2550 (VIESEHPYKP…NQHLGKSLLV (529 aa)) is RAE1 binding. A Filamin repeat occupies 2341 to 2443 (SSNTDMTYGG…IDAGLEVKVK (103 aa)). T2683 carries the phosphothreonine modification. 4 disordered regions span residues 2709 to 2931 (LGNS…LHSE), 2943 to 2963 (TNSL…VDEG), 2979 to 3020 (EQEM…EPAK), and 3066 to 3085 (APIR…ETKL). Residues 2718–2733 (NISTSSKPASTSGKSE) are compositionally biased toward polar residues. The span at 2742–2760 (LKPDGRMSRTTADQKKPRG) shows a compositional bias: basic and acidic residues. Residue S2769 is modified to Phosphoserine. Positions 2775–2785 (DAAKLRSDSHS) are enriched in basic and acidic residues. Residues 2786–2810 (RSLSPNHNTLQTLKSDGRMPSSSRA) show a composition bias toward polar residues. Phosphoserine is present on residues S2787, S2789, S2833, S2839, S2869, S2871, and S2920. Residues 2828 to 2843 (PANRSSPSGASSPRSS) are compositionally biased toward low complexity. Basic and acidic residues predominate over residues 2860–2871 (TKLDPPRERSKS). Position 2985 is a phosphoserine (S2985). Basic residues predominate over residues 2988–3001 (ISRKCANRHTRPKK). Phosphoserine occurs at positions 3090, 3478, and 3505. Positions 3605 to 3631 (PVEPEEEEDEENKTSKENSEQEKDTRV) are disordered. A compositionally biased stretch (basic and acidic residues) spans 3616 to 3631 (NKTSKENSEQEKDTRV). Residues 3719–3897 (SISIQSGFEA…VAQQRNCEAE (179 aa)) enclose the DOC domain. The interval 3915-3934 (SGDAEPTPEQEEKALLSSPE) is disordered. T3921 is subject to Phosphothreonine. S3931 and S3932 each carry phosphoserine. Zn(2+) contacts are provided by C4428, C4431, C4446, H4448, H4451, C4454, C4475, C4478, C4544, and C4547. An RING-type; atypical zinc finger spans residues 4428–4479 (CMICFTEALSAAPAIQLDCSHIFHLQCCRRVLENRWLGPRITFGFISCPICK). Residues 4539–4676 (YAYYVCYKCR…LGCGVCRNAH (138 aa)) are tandem cysteine domain. The active site involves C4558. 7 residues coordinate Zn(2+): C4575, C4578, C4587, H4590, C4599, C4602, and C4603. C4610 is an active-site residue. Positions 4617, 4620, 4638, 4652, 4658, 4669, and 4672 each coordinate Zn(2+).

Belongs to the RING-Cys relay (RCR) family. In terms of assembly, interacts with MYC. Interacts with TSC2 (tuberin) when TSC2 is in complex with TSC1 (hamartin). Interacts with FBXO45. Interacts with RAE1. Interacts with CPNE1 (via VWFA domain) and CPNE4 (via VWFA domain). Interacts with (sumoylated) RANGAP1; interaction with sumoylated RANGAP1 inhibits E3 ubiquitin-protein ligase activity and promotes MYCBP2 translocation to the nucleus. Interacts with RAN. Interacts with ATP13A2; the interaction inhibits the ubiquitination of TSC2 by MYCBP2. Interacts with USP11. Post-translationally, autoubiquitinated. As to expression, expressed in all tissues examined, expression is exceptionally abundant in brain and thymus. Colocalizes with TSC1 and TSC2 along the neurites and in the growth cones. Highly expressed in peripheral and central neurons. Colocalized with TSC1 in one of the filopodial extensions at the tip of a growth cone.

It localises to the nucleus. Its subcellular location is the cell projection. The protein localises to the axon. The protein resides in the cytoplasm. It is found in the cytoskeleton. It catalyses the reaction [E2 ubiquitin-conjugating enzyme]-S-ubiquitinyl-L-cysteine + [acceptor protein]-L-threonine = [E2 ubiquitin-conjugating enzyme]-L-cysteine + [acceptor protein]-3-O-ubiquitinyl-L-threonine.. Its pathway is protein modification; protein ubiquitination. Atypical E3 ubiquitin-protein ligase which specifically mediates ubiquitination of threonine and serine residues on target proteins, instead of ubiquitinating lysine residues. Shows esterification activity towards both threonine and serine, with a preference for threonine, and acts via two essential catalytic cysteine residues that relay ubiquitin to its substrate via thioester intermediates. Interacts with the E2 enzymes UBE2D1, UBE2D3, UBE2E1 and UBE2L3. Plays a key role in neural development, probably by mediating ubiquitination of threonine residues on target proteins. Involved in different processes such as regulation of neurite outgrowth, synaptic growth, synaptogenesis and axon degeneration. Required for the formation of major central nervous system axon tracts. Required for proper axon growth by regulating axon navigation and axon branching: acts by regulating the subcellular location and stability of MAP3K12/DLK. Required for proper localization of retinogeniculate projections but not for eye-specific segregation. Regulates axon guidance in the olfactory system. Involved in Wallerian axon degeneration, an evolutionarily conserved process that drives the loss of damaged axons: acts by promoting destabilization of NMNAT2, probably via ubiquitination of NMNAT2. Catalyzes ubiquitination of threonine and/or serine residues on NMNAT2, consequences of threonine and/or serine ubiquitination are however unknown. Regulates the internalization of TRPV1 in peripheral sensory neurons. Mediates ubiquitination and subsequent proteasomal degradation of TSC2/tuberin. Independently of the E3 ubiquitin-protein ligase activity, also acts as a guanosine exchange factor (GEF) for RAN in neurons of dorsal root ganglia. May function as a facilitator or regulator of transcriptional activation by MYC. Acts in concert with HUWE1 to regulate the circadian clock gene expression by promoting the lithium-induced ubiquination and degradation of NR1D1. This is E3 ubiquitin-protein ligase MYCBP2 from Homo sapiens (Human).